Reading from the N-terminus, the 477-residue chain is Cysteine--tRNA ligase (477 aa).

Cys30 contacts Zn(2+). Positions 32–42 (PTVYDYNHIGH) match the 'HIGH' region motif. Residues Cys209, His234, and Glu238 each contribute to the Zn(2+) site. A 'KMSKS' region motif is present at residues 267–271 (KMSKS). Residue Lys270 coordinates ATP.

This sequence belongs to the class-I aminoacyl-tRNA synthetase family. The cofactor is Zn(2+).

The protein resides in the cytoplasm. It catalyses the reaction tRNA(Cys) + L-cysteine + ATP = L-cysteinyl-tRNA(Cys) + AMP + diphosphate. The protein is Cysteine--tRNA ligase of Staphylothermus marinus (strain ATCC 43588 / DSM 3639 / JCM 9404 / F1).